A 712-amino-acid chain; its full sequence is Cadherin-13 (712 aa).

Residues 1 to 22 (MQHKTQLTLSFLLSQVLLLACA) form the signal peptide. Residues 23-138 (EDLECTPGFQ…GNLGIPRQKR (116 aa)) constitute a propeptide that is removed on maturation. N-linked (GlcNAc...) asparagine glycosylation occurs at N86. 5 consecutive Cadherin domains span residues 143 to 245 (TPIL…RPMF), 246 to 363 (KEGP…PPEF), 364 to 477 (TKKE…GPVF), 478 to 585 (HPNP…VPSL), and 586 to 680 (YPTL…LQVC). 5 N-linked (GlcNAc...) asparagine glycosylation sites follow: N382, N500, N530, N638, and N671. D693 carries the GPI-anchor amidated aspartate lipid modification. A propeptide spans 694–712 (ALHISMTLILLSLFSLFCL) (removed in mature form).

By contrast to classical cadherins, homodimerization in trans is not mediated by cadherin EC1 domain strand-swapping, but instead through a homophilic adhesive interface which joins two elongated EC1-EC2 domains through a region near their Ca2+-binding sites to form a tetrahedral, X-like shape. Neural tissues. Also found in muscles; kidney and retina.

The protein resides in the cell membrane. The protein localises to the cytoplasm. Functionally, cadherins are calcium-dependent cell adhesion proteins. They preferentially interact with themselves in a homophilic manner in connecting cells; cadherins may thus contribute to the sorting of heterogeneous cell types. May act as a negative regulator of neural cell growth. The protein is Cadherin-13 (CDH13) of Gallus gallus (Chicken).